Consider the following 300-residue polypeptide: 33 kDa chaperonin (300 aa).

2 disulfide bridges follow: C247–C249 and C280–C283.

It belongs to the HSP33 family. Post-translationally, under oxidizing conditions two disulfide bonds are formed involving the reactive cysteines. Under reducing conditions zinc is bound to the reactive cysteines and the protein is inactive.

It is found in the cytoplasm. Functionally, redox regulated molecular chaperone. Protects both thermally unfolding and oxidatively damaged proteins from irreversible aggregation. Plays an important role in the bacterial defense system toward oxidative stress. The chain is 33 kDa chaperonin from Prochlorococcus marinus subsp. pastoris (strain CCMP1986 / NIES-2087 / MED4).